The chain runs to 352 residues: Guanine nucleotide-binding protein alpha-7 subunit (352 aa).

Gly2 is lipidated: N-myristoyl glycine. Cys4 carries the S-palmitoyl cysteine lipid modification. A G-alpha domain is found at 32-352 (RIIKLLLLGA…AKNLKSMGLC (321 aa)). The segment at 35-48 (KLLLLGAGESGKST) is G1 motif. GTP is bound by residues 40–47 (GAGESGKS), 174–180 (LRTRIKT), 199–203 (DVGGQ), 268–271 (NKKD), and Ala324. 2 residues coordinate Mg(2+): Ser47 and Thr180. The tract at residues 172–180 (DLLRTRIKT) is G2 motif. Residues 195-204 (FRVIDVGGQR) form a G3 motif region. The interval 264–271 (ILFLNKKD) is G4 motif. The segment at 322–327 (TCATDT) is G5 motif.

The protein belongs to the G-alpha family. G(i/o/t/z) subfamily. As to quaternary structure, g proteins are composed of 3 units; alpha, beta and gamma. The alpha chain contains the guanine nucleotide binding site.

Guanine nucleotide-binding proteins (G proteins) are involved as modulators or transducers in various transmembrane signaling systems. The protein is Guanine nucleotide-binding protein alpha-7 subunit (gpa-7) of Caenorhabditis briggsae.